A 155-amino-acid chain; its full sequence is MRKNRAPKRTVLPDPVFNNTLVTRIINVIMEDGKKGLAQRILYGAFDLIEQRTKEKPLTVFERAVGNVMPRLELRVRRIAGSNYQVPTEVPQDRKIALALRWIAMFARKRHEKTMLEKIANEIIDASNNTGAAIKKKDDTHKMAEANKAFAHMRW.

The protein belongs to the universal ribosomal protein uS7 family. Part of the 30S ribosomal subunit. Contacts proteins S9 and S11.

Its function is as follows. One of the primary rRNA binding proteins, it binds directly to 16S rRNA where it nucleates assembly of the head domain of the 30S subunit. Is located at the subunit interface close to the decoding center, probably blocks exit of the E-site tRNA. This chain is Small ribosomal subunit protein uS7, found in Mycoplasma pneumoniae (strain ATCC 29342 / M129 / Subtype 1) (Mycoplasmoides pneumoniae).